The primary structure comprises 610 residues: Zinc finger protein 823 (610 aa).

The KRAB domain occupies 4 to 97 (VAFEDVAVNF…VNKNTPRVNP (94 aa)). 10 C2H2-type zinc fingers span residues 164 to 186 (FDCKECAKTFSSLGNLRRHMAAH), 192 to 214 (YKCKLCGKAFVWPSLFHLHERTH), 220 to 242 (YECKQCSKAFPFYSSYLRHERIH), 248 to 270 (YECKQCSKAFPDYSTYLRHERTH), 276 to 298 (YKCTQCGKAFSCYYYTRLHERTH), 304 to 326 (YACKQCGKTFYHHTSFRRHMIRH), 332 to 354 (HKCKICGKGFDCPSSVRNHETTH), 360 to 382 (YECKQCGKVLSHSSSFRSHMITH), 388 to 410 (QKCKICGKAFGCPSLFQRHERTH), and 416 to 438 (YQCKQCGKAFSLAGSLRRHEATH). The C2H2-type 11; atypical zinc finger occupies 444 to 465 (YKCQCGKAFSDLSSFQNHETTH). 5 C2H2-type zinc fingers span residues 471–493 (YECKECGKAFSCFKYLSQHKRTH), 499–521 (YECKTCRKAFSHFSNLKVHERIH), 527–549 (YECKECGKAFSWLTCLLRHERIH), 555–577 (YECLQCGKAFTRSRFLRGHEKTH), and 583–605 (YECKECGKALSSLRSLHRHKRTH).

The protein belongs to the krueppel C2H2-type zinc-finger protein family.

The protein localises to the nucleus. May be involved in transcriptional regulation. The chain is Zinc finger protein 823 (ZNF823) from Homo sapiens (Human).